Consider the following 560-residue polypeptide: Probable sulfate transporter Rv1739c (560 aa).

Residues 1–436 (MIPTMTSAGW…VLGFVPGIAG (436 aa)) form a required for sulfate transport in E.coli region. The next 11 helical transmembrane spans lie at 29-49 (VLAGLTVAAYLIPQAMAYATV), 51-71 (GLPPAAGLWASIAPLAIYALL), 79-99 (IGPESATALMTAAVLAPMAAG), 105-125 (AVLAATLGLLVGLICLLAGTA), 138-158 (VLVGYMAGIALVMISSQLGTI), 184-204 (WPTFVLAMSVLALLTMLTRWA), 207-227 (APGPIIAVLAATMLVAVMSLD), 256-276 (ALIIPAAGIAIVTFTDGVLTA), 333-353 (LIALGLVVIVMVFASGLLAMF), 355-375 (IAALGALVVYAALRLIDLSEF), and 394-414 (AAVLGLGVFYGVLAAVALSIL). One can recognise an STAS domain in the interval 442–557 (DYPQAKRVPG…MTLPTAVQAF (116 aa)).

Belongs to the SLC26A/SulP transporter (TC 2.A.53) family.

It localises to the cell membrane. Its function is as follows. Expression in E.coli induces sulfate uptake during early- to mid-log phase growth. Uptake is maximal at pH 6.0, is sulfate-specific, requires E.coli CysA and the transmembrane segment but not the STAS domain of the protein. This Mycobacterium tuberculosis (strain ATCC 25618 / H37Rv) protein is Probable sulfate transporter Rv1739c.